The sequence spans 1301 residues: Zinc finger protein 532 (1301 aa).

Disordered regions lie at residues 26–206 (PKAA…RETE), 223–266 (AEDK…SSSK), and 281–366 (KAAS…IKTI). Residues 32 to 52 (SGHDDHESHMKQNAHGEDDSH) show a composition bias toward basic and acidic residues. Residues 84 to 101 (PTGNGLHNGFLTASSLDS) are compositionally biased toward polar residues. Residues 102–111 (YSKDGAKSLK) are compositionally biased toward basic and acidic residues. Polar residues predominate over residues 122 to 133 (KDSTFSQFSPIS). Phosphoserine occurs at positions 130, 133, and 134. Residues 136 to 151 (EEFDDDEKIEVDDPPD) show a composition bias toward acidic residues. A compositionally biased stretch (polar residues) spans 158-170 (SFRSNVLTGSAPQ). Lys175 is modified (N6-acetyllysine). The span at 182-195 (ENSSKTGLSTSGNV) shows a compositional bias: polar residues. 2 stretches are compositionally biased toward basic and acidic residues: residues 196-206 (EKNKAVKRETE) and 223-250 (AEDK…EKND). At Thr205 the chain carries Phosphothreonine. Residues Ser252, Ser307, and Ser314 each carry the phosphoserine modification. The segment covering 303–315 (EVNDSPRAADKSP) has biased composition (basic and acidic residues). Over residues 337 to 359 (SISSENSSKGSPSSPAGSTPAIP) the composition is skewed to low complexity. Ser434 is modified (phosphoserine). Glycyl lysine isopeptide (Lys-Gly) (interchain with G-Cter in SUMO2) cross-links involve residues Lys459 and Lys516. The segment at 616–635 (YKCLECGDSFALEKSLTQHY) adopts a C2H2-type 1; degenerate zinc-finger fold. The segment at 754–779 (LKCLECNEVFQDETSLATHFQQAADT) adopts a C2H2-type 2; degenerate zinc-finger fold. C2H2-type zinc fingers lie at residues 783-805 (KTCT…QRIH), 842-865 (FRCV…QGSH), 870-893 (YKCP…YTQH), 905-927 (YKCS…FDQH), and 936-959 (FKCP…KSMH). Lys980 participates in a covalent cross-link: Glycyl lysine isopeptide (Lys-Gly) (interchain with G-Cter in SUMO2). The segment at 983 to 1017 (TQNSANQNKEDTKSMNGKEKLEKKSPSPVKKSMET) is disordered. Positions 990 to 1017 (NKEDTKSMNGKEKLEKKSPSPVKKSMET) are enriched in basic and acidic residues. C2H2-type zinc fingers lie at residues 1025–1048 (WTCW…RKEH) and 1055–1078 (HPCR…RIKH). A C2H2-type 10; degenerate zinc finger spans residues 1085–1111 (YACSHCPDSRRTFTKRLMLEKHVQLMH). Ser1140 bears the Phosphoserine mark. Residues Lys1144 and Lys1167 each participate in a glycyl lysine isopeptide (Lys-Gly) (interchain with G-Cter in SUMO2) cross-link. The C2H2-type 11 zinc finger occupies 1203-1226 (YQCRECGLCYTSHVSLSRHLFIVH). The disordered stretch occupies residues 1230-1263 (EPQPVSKQNGAGEDNQQENKPSHEDESPDGAVSD). The segment at 1264 to 1286 (RKCKVCAKTFETEAALNTHMRTH) adopts a C2H2-type 12 zinc-finger fold.

This sequence belongs to the krueppel C2H2-type zinc-finger protein family.

The protein localises to the nucleus. In terms of biological role, may be involved in transcriptional regulation. This chain is Zinc finger protein 532 (ZNF532), found in Homo sapiens (Human).